The sequence spans 553 residues: Arginine--tRNA ligase (553 aa).

The 'HIGH' region signature appears at 130 to 140; it reads ANPTGDLHIGH.

This sequence belongs to the class-I aminoacyl-tRNA synthetase family. In terms of assembly, monomer.

It is found in the cytoplasm. The catalysed reaction is tRNA(Arg) + L-arginine + ATP = L-arginyl-tRNA(Arg) + AMP + diphosphate. The protein is Arginine--tRNA ligase of Staphylococcus aureus (strain MSSA476).